Here is a 236-residue protein sequence, read N- to C-terminus: Syntaxin-8 (236 aa).

Topologically, residues 1 to 215 (MAPDPWFSTY…LVDRKSASCG (215 aa)) are cytoplasmic. Residues 42–65 (LTIRTLLKNLKVKIDLLKDLLLRA) are a coiled coil. Residues Ser102 and Ser160 each carry the phosphoserine modification. The 63-residue stretch at 145 to 207 (QKIIQEQDAG…RTEARRVTLV (63 aa)) folds into the t-SNARE coiled-coil homology domain. The helical; Anchor for type IV membrane protein transmembrane segment at 216–232 (MIMVILLLLVAIVVVAV) threads the bilayer. The Vesicular portion of the chain corresponds to 233-236 (WPTN).

Belongs to the syntaxin family. In terms of assembly, part of the SNARE core complex containing STX7, VAMP8 and VTI1B. Interacts with VAMP8. Forms a SNARE complex with STX7, VTI1B and VAMP8 which functions in the homotypic fusion of late endosomes. Component of the SNARE complex composed of STX7, STX8, VAMP7 and VTI1B that is required for heterotypic fusion of late endosomes with lysosomes. Interacts with HECTD3. Interacts with TPC1. Ubiquitinated by HECTD3. In terms of tissue distribution, widely expressed in all tissues examined.

Its subcellular location is the membrane. In terms of biological role, vesicle trafficking protein that functions in the early secretory pathway, possibly by mediating retrograde transport from cis-Golgi membranes to the ER. The polypeptide is Syntaxin-8 (Stx8) (Rattus norvegicus (Rat)).